A 473-amino-acid chain; its full sequence is Arginine biosynthesis bifunctional protein ArgJ, mitochondrial (473 aa).

6 residues coordinate substrate: Thr-201, Lys-230, Thr-241, Glu-328, Asn-468, and Thr-473. The active-site Nucleophile is the Thr-241.

This sequence belongs to the ArgJ family. In terms of assembly, heterodimer of an alpha and a beta chain. The alpha and beta chains are autoproteolytically processed from a single precursor protein within the mitochondrion.

The protein resides in the mitochondrion matrix. It carries out the reaction N(2)-acetyl-L-ornithine + L-glutamate = N-acetyl-L-glutamate + L-ornithine. The enzyme catalyses L-glutamate + acetyl-CoA = N-acetyl-L-glutamate + CoA + H(+). Its pathway is amino-acid biosynthesis; L-arginine biosynthesis; L-ornithine and N-acetyl-L-glutamate from L-glutamate and N(2)-acetyl-L-ornithine (cyclic): step 1/1. It participates in amino-acid biosynthesis; L-arginine biosynthesis; N(2)-acetyl-L-ornithine from L-glutamate: step 1/4. Functionally, catalyzes two activities which are involved in the cyclic version of arginine biosynthesis: the synthesis of acetylglutamate from glutamate and acetyl-CoA, and of ornithine by transacetylation between acetylornithine and glutamate. The sequence is that of Arginine biosynthesis bifunctional protein ArgJ, mitochondrial from Ajellomyces capsulatus (strain G186AR / H82 / ATCC MYA-2454 / RMSCC 2432) (Darling's disease fungus).